Consider the following 349-residue polypeptide: Anthranilate phosphoribosyltransferase (349 aa).

5-phospho-alpha-D-ribose 1-diphosphate contacts are provided by residues Gly87, 90–91, Thr95, 97–100, 115–123, and Ser127; these read GD, NIST, and KHGNRSVSS. Gly87 contributes to the anthranilate binding site. Ser99 lines the Mg(2+) pocket. Asn118 provides a ligand contact to anthranilate. An anthranilate-binding site is contributed by Arg173. Mg(2+)-binding residues include Asp231 and Glu232.

It belongs to the anthranilate phosphoribosyltransferase family. In terms of assembly, homodimer. Mg(2+) serves as cofactor.

The catalysed reaction is N-(5-phospho-beta-D-ribosyl)anthranilate + diphosphate = 5-phospho-alpha-D-ribose 1-diphosphate + anthranilate. The protein operates within amino-acid biosynthesis; L-tryptophan biosynthesis; L-tryptophan from chorismate: step 2/5. Catalyzes the transfer of the phosphoribosyl group of 5-phosphorylribose-1-pyrophosphate (PRPP) to anthranilate to yield N-(5'-phosphoribosyl)-anthranilate (PRA). In Shewanella loihica (strain ATCC BAA-1088 / PV-4), this protein is Anthranilate phosphoribosyltransferase.